The primary structure comprises 290 residues: Phosphatidylglycerol--prolipoprotein diacylglyceryl transferase (290 aa).

7 consecutive transmembrane segments (helical) span residues 21 to 41, 60 to 80, 98 to 118, 124 to 144, 198 to 218, 224 to 244, and 258 to 278; these read VSLHWYGLMYLVGFVFAMWLA, LLYAGFLGVFLGGRIGYVLFY, GGMSFHGGLIGVIVVMLWFAH, FFQVADFVAPMVPFGLGAGRL, SQLYEMLLEGVVLFIILNLFI, IGSVSGLFLICYGAFRILVEF, and VISMGQILSLPMILAGVIMMA. Position 143 (R143) interacts with a 1,2-diacyl-sn-glycero-3-phospho-(1'-sn-glycerol).

This sequence belongs to the Lgt family.

It localises to the cell inner membrane. The catalysed reaction is L-cysteinyl-[prolipoprotein] + a 1,2-diacyl-sn-glycero-3-phospho-(1'-sn-glycerol) = an S-1,2-diacyl-sn-glyceryl-L-cysteinyl-[prolipoprotein] + sn-glycerol 1-phosphate + H(+). It participates in protein modification; lipoprotein biosynthesis (diacylglyceryl transfer). Functionally, catalyzes the transfer of the diacylglyceryl group from phosphatidylglycerol to the sulfhydryl group of the N-terminal cysteine of a prolipoprotein, the first step in the formation of mature lipoproteins. This is Phosphatidylglycerol--prolipoprotein diacylglyceryl transferase from Sodalis glossinidius (strain morsitans).